A 348-amino-acid polypeptide reads, in one-letter code: VIP36-like protein (348 aa).

The first 44 residues, 1-44 (MAATLGPLGSWQQWRRCLSARDGSRMLLLLLLLGSGQGPQQVGA), serve as a signal peptide directing secretion. The Lumenal segment spans residues 45–313 (GQTFEYLKRE…APLPPLSGLA (269 aa)). The region spanning 49–274 (EYLKREHSLS…DVISLKLFEL (226 aa)) is the L-type lectin-like domain. Residues Ser93 and Asp128 each contribute to the a carbohydrate site. Asp159, Tyr161, and Asn163 together coordinate Ca(2+). 161 to 163 (YPN) contacts a carbohydrate. Residue Asn181 is glycosylated (N-linked (GlcNAc...) (high mannose) asparagine). His188 is an a carbohydrate binding site. Position 191 (Asp191) interacts with Ca(2+). Cys200 and Cys237 are joined by a disulfide. A carbohydrate is bound at residue 258–260 (GDL). A helical transmembrane segment spans residues 314–336 (LFLIVFFSLVFSVFAIVIGIILY). Topologically, residues 337 to 348 (NKWQEQSRKRFY) are cytoplasmic. The short motif at 344-346 (RKR) is the Endoplasmic reticulum retention signal element.

As to expression, expressed in numerous tissues. Highest expression in skeletal muscle and kidney, intermediate levels in heart, liver and placenta, low levels in brain, thymus, spleen, small intestine and lung.

Its subcellular location is the endoplasmic reticulum membrane. The protein resides in the golgi apparatus membrane. Its function is as follows. May be involved in the regulation of export from the endoplasmic reticulum of a subset of glycoproteins. May function as a regulator of ERGIC-53. The sequence is that of VIP36-like protein (LMAN2L) from Homo sapiens (Human).